We begin with the raw amino-acid sequence, 196 residues long: Small ribosomal subunit protein uS4c (196 aa).

Positions Gly16 to Phe36 are disordered. One can recognise an S4 RNA-binding domain in the interval Met89–Leu169.

Belongs to the universal ribosomal protein uS4 family. Part of the 30S ribosomal subunit. Contacts protein S5. The interaction surface between S4 and S5 is involved in control of translational fidelity.

The protein localises to the plastid. Its subcellular location is the chloroplast. One of the primary rRNA binding proteins, it binds directly to 16S rRNA where it nucleates assembly of the body of the 30S subunit. Its function is as follows. With S5 and S12 plays an important role in translational accuracy. This Brachypodium pinnatum (Tor grass) protein is Small ribosomal subunit protein uS4c (rps4).